The following is a 121-amino-acid chain: Small ribosomal subunit protein uS13 (121 aa).

A disordered region spans residues 91 to 121; it reads HRKGLPVRGQRTRTNARTRKGKKKTVAGKKK.

It belongs to the universal ribosomal protein uS13 family. As to quaternary structure, part of the 30S ribosomal subunit. Forms a loose heterodimer with protein S19. Forms two bridges to the 50S subunit in the 70S ribosome.

Functionally, located at the top of the head of the 30S subunit, it contacts several helices of the 16S rRNA. In the 70S ribosome it contacts the 23S rRNA (bridge B1a) and protein L5 of the 50S subunit (bridge B1b), connecting the 2 subunits; these bridges are implicated in subunit movement. Contacts the tRNAs in the A and P-sites. The protein is Small ribosomal subunit protein uS13 of Treponema denticola (strain ATCC 35405 / DSM 14222 / CIP 103919 / JCM 8153 / KCTC 15104).